A 194-amino-acid chain; its full sequence is uncharacterized protein (194 aa).

Residues Val-34–Pro-192 enclose the SIS domain.

Belongs to the SIS family. DiaA subfamily.

This is an uncharacterized protein from Haemophilus influenzae (strain ATCC 51907 / DSM 11121 / KW20 / Rd).